The primary structure comprises 394 residues: NAD(P)H-quinone oxidoreductase subunit H (394 aa).

This sequence belongs to the complex I 49 kDa subunit family. NDH-1 can be composed of about 15 different subunits; different subcomplexes with different compositions have been identified which probably have different functions.

Its subcellular location is the cellular thylakoid membrane. The catalysed reaction is a plastoquinone + NADH + (n+1) H(+)(in) = a plastoquinol + NAD(+) + n H(+)(out). The enzyme catalyses a plastoquinone + NADPH + (n+1) H(+)(in) = a plastoquinol + NADP(+) + n H(+)(out). In terms of biological role, NDH-1 shuttles electrons from an unknown electron donor, via FMN and iron-sulfur (Fe-S) centers, to quinones in the respiratory and/or the photosynthetic chain. The immediate electron acceptor for the enzyme in this species is believed to be plastoquinone. Couples the redox reaction to proton translocation, and thus conserves the redox energy in a proton gradient. Cyanobacterial NDH-1 also plays a role in inorganic carbon-concentration. This is NAD(P)H-quinone oxidoreductase subunit H from Parasynechococcus marenigrum (strain WH8102).